Consider the following 330-residue polypeptide: DNA-directed RNA polymerase subunit alpha (330 aa).

The alpha N-terminal domain (alpha-NTD) stretch occupies residues 1–236; that stretch reads MQGSVTEFLK…EQLDAFVDLR (236 aa). The interval 250–330 is alpha C-terminal domain (alpha-CTD); that stretch reads FDPILLRPVD…NWPPASIAED (81 aa).

Belongs to the RNA polymerase alpha chain family. As to quaternary structure, homodimer. The RNAP catalytic core consists of 2 alpha, 1 beta, 1 beta' and 1 omega subunit. When a sigma factor is associated with the core the holoenzyme is formed, which can initiate transcription.

It carries out the reaction RNA(n) + a ribonucleoside 5'-triphosphate = RNA(n+1) + diphosphate. Its function is as follows. DNA-dependent RNA polymerase catalyzes the transcription of DNA into RNA using the four ribonucleoside triphosphates as substrates. This is DNA-directed RNA polymerase subunit alpha from Vibrio campbellii (strain ATCC BAA-1116).